Reading from the N-terminus, the 559-residue chain is Cocaine esterase (559 aa).

Positions 1 to 26 (MRLHRLRARLSAVACGLLLLLVRGQG) are cleaved as a signal peptide. At Gln-27 the chain carries Pyrrolidone carboxylic acid. Cys-95 and Cys-123 form a disulfide bridge. Asn-111 carries N-linked (GlcNAc...) asparagine glycosylation. The active-site Acyl-ester intermediate is Ser-228. A glycan (N-linked (GlcNAc...) asparagine) is linked at Asn-276. An intrachain disulfide couples Cys-280 to Cys-291. Catalysis depends on charge relay system residues Glu-345 and His-457. The Prevents secretion from ER motif lies at 556-559 (HTEL).

Belongs to the type-B carboxylesterase/lipase family. Monomer. Post-translationally, glycosylated. Preferentially expressed in intestine with moderate expression in liver. Within the intestine, highest expression is found in small intestine with lower expression in colon and rectum.

The protein localises to the endoplasmic reticulum lumen. It carries out the reaction cocaine + H2O = ecgonine methyl ester + benzoate + H(+). It catalyses the reaction a carboxylic ester + H2O = an alcohol + a carboxylate + H(+). The enzyme catalyses 4-methylumbelliferyl acetate + H2O = 4-methylumbelliferone + acetate + H(+). The catalysed reaction is 2-(5Z,8Z,11Z,14Z-eicosatetraenoyl)-glycerol + H2O = glycerol + (5Z,8Z,11Z,14Z)-eicosatetraenoate + H(+). It carries out the reaction prostaglandin E2 1-glyceryl ester + H2O = prostaglandin E2 + glycerol + H(+). It catalyses the reaction prostaglandin F2alpha 1-glyceryl ester + H2O = prostaglandin F2alpha + glycerol + H(+). Its function is as follows. Involved in the detoxification of xenobiotics and in the activation of ester and amide prodrugs. Shows high catalytic efficiency for hydrolysis of cocaine, 4-methylumbelliferyl acetate, heroin and 6-monoacetylmorphine. Hydrolyzes aspirin, substrates with large alcohol group and small acyl group and endogenous lipids such as triacylglycerol. Converts monoacylglycerides to free fatty acids and glycerol. Hydrolyzes of 2-arachidonoylglycerol and prostaglandins. In Homo sapiens (Human), this protein is Cocaine esterase.